The sequence spans 488 residues: Serine protease HTR4 (488 aa).

A signal peptide spans 1–35 (MSRSKMSSQRLWAVRAQFLLLWLLLWAAPVPWAEA). The 79-residue stretch at 40 to 118 (VSLPCPDACD…RAWLGTCGCA (79 aa)) folds into the IGFBP N-terminal domain. 6 disulfide bridges follow: C44–C70, C48–C72, C53–C73, C59–C76, C84–C98, and C92–C115. The interval 213 to 373 (GSGFIVSEDG…IPSDRIRQFL (161 aa)) is serine protease. Residues H229, D259, and S337 each act as charge relay system in the active site. The PDZ domain maps to 384–476 (KAPLQKKYLG…LSIIVLRGSQ (93 aa)).

The protein belongs to the peptidase S1C family.

It is found in the secreted. Serine protease. The sequence is that of Serine protease HTR4 (Htra4) from Rattus norvegicus (Rat).